Reading from the N-terminus, the 2925-residue chain is TPR and ankyrin repeat-containing protein 1 (2925 aa).

TPR repeat units lie at residues alanine 15–tyrosine 48 and lysine 50–serine 82. ANK repeat units lie at residues glutamate 168–threonine 198, proline 203–glycine 232, aspartate 240–leucine 276, serine 463–alanine 492, glutamate 497–phenylalanine 518, and asparagine 546–isoleucine 575. Disordered regions lie at residues serine 612–threonine 669, proline 706–glutamate 741, and valine 1077–valine 1103. Residues serine 624–phenylalanine 641 show a composition bias toward polar residues. Positions alanine 720–proline 730 are enriched in basic and acidic residues. Residues glycine 1085–valine 1103 show a composition bias toward acidic residues. 2 TPR repeats span residues proline 1699 to lysine 1732 and leucine 1793 to leucine 1826. A coiled-coil region spans residues glutamate 2301 to arginine 2330.

The chain is TPR and ankyrin repeat-containing protein 1 (TRANK1) from Homo sapiens (Human).